A 376-amino-acid chain; its full sequence is Putative transmembrane protein 183BP (376 aa).

Disordered regions lie at residues 1-20 and 102-127; these read MARG…AMPK and AQEE…ELDG. A helical membrane pass occupies residues 300 to 320; sequence LNFIFIPIVMGMIFTLFTINV.

The protein belongs to the TMEM183 family. Expressed in brain, lung, pancreas, thymus, intestine and blood. Not detected in heart, placenta, liver, muscle, kidney, spleen, prostate, testis, ovary and colon.

It is found in the membrane. This is Putative transmembrane protein 183BP from Homo sapiens (Human).